We begin with the raw amino-acid sequence, 820 residues long: MAAFERNPSRWKGTRFRRGLGASRIAAQAILSLTEKQSQGRWPSFPLGLKSKGTFRSASSYLLHQLIHRSHEAEAEQEEKQQEDGESEESEESEMQNLEDKYDGILREETVAEAITGLGWSGRGTEQVYLNLNLSHCELVDISILCGYVHLQKLNLSGNRIEDLSCVSCMPYLLELNASQNKLTTFFNFKPPQNLKKVDFSSNLISEMYDLSAYHTLTQLILDNNEIEEITGLENCISLTHLSLAGNKITTIKGLGTLPIKVLSLSNNMIETITGLEELKALQNLDLSHNQISSLQGLENHDLLEVINLEDNKIKELSEIEYIENLPILRVLNLLRNPIQTKPEYWFFVIYMLLRLTELDQQKIKVEEKVFAVNKYDPPPEVVAVQDHMTHVVNSMSQPQRIWDSTLPSLDAPYPMLILTGPAACGKRELAHRLCRQFSTYFRYGACHTTRPPYFGEGDRVDYHFISQEVFDEMLNMGKFILTFNYGNHNYGLNRDTIEGIARDGLASCIHMELEGVRSLKYSYFEPRYILVVPMDKEKYEGYLRRKGLFSRAEIEIAVSRVDLYVKVNQKYPGYFDAVINADDMDIAYQKLSELIREYLGLTETAAKTLAPTADTKTSYLKCEDYSRKSSTVEFLDSTDRNYFTKLWAKLSSKKSPVERESLHRQHEAARQALMGKTPRDHTLLFQRGPVPIPTVSGQQYFATIDELQKTFELSDDLFKTPSGTYPETSKDSNISKRYSTYFHTCPWSKELPFQLPEGGISSRPGSAGSDEVDGALKALRVASSMQEKVAQHKRLSAITIMDPGSNTKPTLPPIPHGRR.

Positions 72–83 are enriched in basic and acidic residues; sequence EAEAEQEEKQQE. The segment at 72 to 96 is disordered; the sequence is EAEAEQEEKQQEDGESEESEESEMQ. Residues 84–94 are compositionally biased toward acidic residues; sequence DGESEESEESE. 9 LRR repeats span residues 129 to 149, 150 to 171, 172 to 193, 194 to 215, 216 to 237, 238 to 259, 260 to 280, 281 to 302, and 303 to 324; these read YLNL…CGYV, HLQK…SCMP, YLLE…KPPQ, NLKK…SAYH, TLTQ…ENCI, SLTH…GTLP, IKVL…EELK, ALQN…ENHD, and LLEV…EYIE. The 39-residue stretch at 337–375 folds into the LRRCT domain; that stretch reads NPIQTKPEYWFFVIYMLLRLTELDQQKIKVEEKVFAVNK. Residues 414–597 enclose the Guanylate kinase-like domain; the sequence is YPMLILTGPA…AYQKLSELIR (184 aa). Residue 421 to 428 coordinates ATP; the sequence is GPAACGKR. The disordered stretch occupies residues 800 to 820; that stretch reads TIMDPGSNTKPTLPPIPHGRR. Pro residues predominate over residues 811–820; that stretch reads TLPPIPHGRR.

Interacts (via guanylate kinase-like domain) with RIMBP3 (via coiled-coil region). Interacts (via guanylate kinase-like domain) with HOOK2. Interacts (via LRRCT domain) with KLC3. Interacts with HOOK1 and HOOK3. As to expression, highly expressed in the testis. During spermatid development is initially localized to a supra-nuclear region of round spermatids, and is particularly evident at the leading edge of the developing acrosome and acroplaxome. As maturation proceeded and nuclear elongation initiated, LRGUK moves distally to ultimately reside on the microtubules of the manchette. LRGUK is also evident in the sperm basal body and the sperm tail.

It is found in the cytoplasmic vesicle. It localises to the secretory vesicle. Its subcellular location is the acrosome. The protein resides in the cytoplasm. The protein localises to the cytoskeleton. It is found in the cilium basal body. Functionally, involved in multiple aspects of sperm assembly including acrosome attachment, shaping of the sperm head and in the early aspects of axoneme development. Not essential for primary cilium biogenesis. The protein is Leucine-rich repeat and guanylate kinase domain-containing protein (Lrguk) of Mus musculus (Mouse).